The chain runs to 520 residues: Mu-like prophage FluMu protein gp29 (520 aa).

To phage Mu protein gp29.

The chain is Mu-like prophage FluMu protein gp29 from Haemophilus influenzae (strain ATCC 51907 / DSM 11121 / KW20 / Rd).